We begin with the raw amino-acid sequence, 354 residues long: Uroporphyrinogen decarboxylase (354 aa).

Residues 27 to 31 (RQAGR), Asp77, Tyr154, Ser209, and His327 each bind substrate.

Belongs to the uroporphyrinogen decarboxylase family. As to quaternary structure, homodimer.

The protein localises to the cytoplasm. The catalysed reaction is uroporphyrinogen III + 4 H(+) = coproporphyrinogen III + 4 CO2. It functions in the pathway porphyrin-containing compound metabolism; protoporphyrin-IX biosynthesis; coproporphyrinogen-III from 5-aminolevulinate: step 4/4. Catalyzes the decarboxylation of four acetate groups of uroporphyrinogen-III to yield coproporphyrinogen-III. This is Uroporphyrinogen decarboxylase from Shewanella sp. (strain ANA-3).